The primary structure comprises 122 residues: Large ribosomal subunit protein uL14 (122 aa).

This sequence belongs to the universal ribosomal protein uL14 family. In terms of assembly, part of the 50S ribosomal subunit. Forms a cluster with proteins L3 and L19. In the 70S ribosome, L14 and L19 interact and together make contacts with the 16S rRNA in bridges B5 and B8.

Functionally, binds to 23S rRNA. Forms part of two intersubunit bridges in the 70S ribosome. This Baumannia cicadellinicola subsp. Homalodisca coagulata protein is Large ribosomal subunit protein uL14.